A 203-amino-acid polypeptide reads, in one-letter code: Dephospho-CoA kinase (203 aa).

The DPCK domain occupies 5–203 (IVGLTGGIAS…VVYRVAASEH (199 aa)). Residue 13–18 (ASGKSA) coordinates ATP.

Belongs to the CoaE family.

Its subcellular location is the cytoplasm. It carries out the reaction 3'-dephospho-CoA + ATP = ADP + CoA + H(+). The protein operates within cofactor biosynthesis; coenzyme A biosynthesis; CoA from (R)-pantothenate: step 5/5. Functionally, catalyzes the phosphorylation of the 3'-hydroxyl group of dephosphocoenzyme A to form coenzyme A. In Xanthomonas euvesicatoria pv. vesicatoria (strain 85-10) (Xanthomonas campestris pv. vesicatoria), this protein is Dephospho-CoA kinase.